Reading from the N-terminus, the 416-residue chain is Adrenocortical dysplasia protein (416 aa).

A PWI motif is present at residues 11–13 (PWI). Phosphoserine is present on Ser-25. The interaction with POT1 stretch occupies residues 156–245 (ESASSSAGLT…SSTGSSQKAR (90 aa)). The span at 234–251 (ILSSTGSSQKARGTSASP) shows a compositional bias: polar residues. Residues 234 to 306 (ILSSTGSSQK…TSPPCNSTPS (73 aa)) form a disordered region. Low complexity predominate over residues 259–272 (SGASVSLLSALATS). Over residues 273-292 (DPGQMDSSQSPPAVGSTSPR) the composition is skewed to polar residues. Ser-313 and Ser-317 each carry phosphoserine. Lys-345 is covalently cross-linked (Glycyl lysine isopeptide (Lys-Gly) (interchain with G-Cter in SUMO2)).

In terms of assembly, component of the shelterin complex (telosome) composed of TERF1, TERF2, TINF2, TERF2IP ACD and POT1. Forms heterodimers with POT1. Identified in a complex with POT1 and single-stranded telomeric DNA. Interacts with STN1 and TINF2. Ubiquitous.

Its subcellular location is the nucleus. It is found in the chromosome. The protein localises to the telomere. Its function is as follows. Component of the shelterin complex (telosome) that is involved in the regulation of telomere length and protection. Shelterin associates with arrays of double-stranded TTAGGG repeats added by telomerase and protects chromosome ends. Without its protective activity, telomeres are no longer hidden from the DNA damage surveillance and chromosome ends are inappropriately processed by DNA repair pathways. Promotes binding of POT1 to single-stranded telomeric DNA. Modulates the inhibitory effects of POT1 on telomere elongation. The ACD-POT1 heterodimer enhances telomere elongation by recruiting telomerase to telomeres and increasing its processivity. May play a role in organogenesis. This is Adrenocortical dysplasia protein from Mus musculus (Mouse).